The sequence spans 545 residues: Chaperonin GroEL (545 aa).

Residues 30-33, lysine 51, 87-91, glycine 415, and aspartate 496 each bind ATP; these read TLGP and DGTTT.

The protein belongs to the chaperonin (HSP60) family. As to quaternary structure, forms a cylinder of 14 subunits composed of two heptameric rings stacked back-to-back. Interacts with the co-chaperonin GroES.

It localises to the cytoplasm. It carries out the reaction ATP + H2O + a folded polypeptide = ADP + phosphate + an unfolded polypeptide.. In terms of biological role, together with its co-chaperonin GroES, plays an essential role in assisting protein folding. The GroEL-GroES system forms a nano-cage that allows encapsulation of the non-native substrate proteins and provides a physical environment optimized to promote and accelerate protein folding. This chain is Chaperonin GroEL, found in Chlorobaculum tepidum (strain ATCC 49652 / DSM 12025 / NBRC 103806 / TLS) (Chlorobium tepidum).